A 130-amino-acid chain; its full sequence is Small ribosomal subunit protein uS8 (130 aa).

This sequence belongs to the universal ribosomal protein uS8 family. In terms of assembly, part of the 30S ribosomal subunit. Contacts proteins S5 and S12.

One of the primary rRNA binding proteins, it binds directly to 16S rRNA central domain where it helps coordinate assembly of the platform of the 30S subunit. The polypeptide is Small ribosomal subunit protein uS8 (Sodalis glossinidius (strain morsitans)).